The primary structure comprises 282 residues: Acetyl-coenzyme A carboxylase carboxyl transferase subunit beta (282 aa).

The CoA carboxyltransferase N-terminal domain maps to glutamine 26–glutamate 282.

This sequence belongs to the AccD/PCCB family. Acetyl-CoA carboxylase is a heterohexamer composed of biotin carboxyl carrier protein (AccB), biotin carboxylase (AccC) and two subunits each of ACCase subunit alpha (AccA) and ACCase subunit beta (AccD).

Its subcellular location is the cytoplasm. The catalysed reaction is N(6)-carboxybiotinyl-L-lysyl-[protein] + acetyl-CoA = N(6)-biotinyl-L-lysyl-[protein] + malonyl-CoA. Its pathway is lipid metabolism; malonyl-CoA biosynthesis; malonyl-CoA from acetyl-CoA: step 1/1. Its function is as follows. Component of the acetyl coenzyme A carboxylase (ACC) complex. Biotin carboxylase (BC) catalyzes the carboxylation of biotin on its carrier protein (BCCP) and then the CO(2) group is transferred by the transcarboxylase to acetyl-CoA to form malonyl-CoA. The sequence is that of Acetyl-coenzyme A carboxylase carboxyl transferase subunit beta from Salinibacter ruber (strain DSM 13855 / M31).